The primary structure comprises 623 residues: Chaperone protein DnaK (623 aa).

The segment covering 582 to 603 has biased composition (low complexity); the sequence is QQQQAAEQAAQQQSGGQQASGS. Residues 582–623 are disordered; it reads QQQQAAEQAAQQQSGGQQASGSNPGKDPNVVDADYEVVNDKK. Positions 614–623 are enriched in acidic residues; sequence ADYEVVNDKK.

It belongs to the heat shock protein 70 family.

In terms of biological role, acts as a chaperone. This chain is Chaperone protein DnaK, found in Methanocella arvoryzae (strain DSM 22066 / NBRC 105507 / MRE50).